A 487-amino-acid chain; its full sequence is 6-phosphogluconate dehydrogenase, decarboxylating 1, chloroplastic (487 aa).

Met-1 is modified (N-acetylmethionine). NADP(+)-binding positions include 13–18 (GLAVMG), 36–38 (NRT), 80–82 (VKA), and Asn-108. Residues Asn-108 and 134-136 (SGG) contribute to the substrate site. Lys-188 (proton acceptor) is an active-site residue. 191–192 (HN) contacts substrate. The active-site Proton donor is the Glu-195. 5 residues coordinate substrate: Tyr-196, Lys-266, Arg-293, Arg-458, and His-464.

This sequence belongs to the 6-phosphogluconate dehydrogenase family. As to quaternary structure, forms homodimer. Forms heterodimers with PGD2 or PGD3.

It is found in the plastid. The protein localises to the chloroplast. The protein resides in the cytoplasm. It localises to the cytosol. The enzyme catalyses 6-phospho-D-gluconate + NADP(+) = D-ribulose 5-phosphate + CO2 + NADPH. Its pathway is carbohydrate degradation; pentose phosphate pathway; D-ribulose 5-phosphate from D-glucose 6-phosphate (oxidative stage): step 3/3. In terms of biological role, catalyzes the oxidative decarboxylation of 6-phosphogluconate to ribulose 5-phosphate and CO(2), with concomitant reduction of NADP to NADPH. The protein is 6-phosphogluconate dehydrogenase, decarboxylating 1, chloroplastic of Arabidopsis thaliana (Mouse-ear cress).